A 402-amino-acid polypeptide reads, in one-letter code: MMAHCAGCERPILDRFLLNVLDRAWHVKCVQCCECKCNLTEKCFSREGKLYCKTDFFRRFGTKCAGCSLGISPSDLVRKARNKVFHLNCFTCMVCNKQLSTGEELYIIDENKFVCKEDYISASSLKESSLNSVSSCTDRSLSPDIQDPIQDESKETDHSTSSDKETANNENEEQNSGTKRRGPRTTIKAKQLETLKAAFIATPKPTRHIREQLAQETGLNMRVIQVWFQNRRSKERRMKQLSALGARRHAFFRSPRRMRPLGGRLDESEILSSGPYSYYGDYQGDYYGSGNYDFFPHGPPSSQTQSPADSSYLQNSGPGSTPLGPLESQLSGHHPSENQRYVDMISHPDTPSPEPGMTGPLHPISGEVFTGGPSPPFSMSNNSGFSGPLPHQNLDINEATVW.

LIM zinc-binding domains follow at residues 3 to 61 and 62 to 125; these read AHCA…RRFG and TKCA…ASSL. Disordered regions lie at residues 133-187, 291-335, and 365-392; these read VSSC…RTTI, NYDF…GHHP, and SGEVFTGGPSPPFSMSNNSGFSGPLPHQ. Residues 151–167 show a composition bias toward basic and acidic residues; that stretch reads DESKETDHSTSSDKETA. The homeobox DNA-binding region spans 180–239; the sequence is RRGPRTTIKAKQLETLKAAFIATPKPTRHIREQLAQETGLNMRVIQVWFQNRRSKERRMK. Residues 300 to 319 are compositionally biased toward polar residues; that stretch reads PSSQTQSPADSSYLQNSGPG.

In terms of assembly, interacts with ldb1 and with the N-terminus of rnf12.

It is found in the nucleus. In terms of biological role, probably involved in the patterning of the nervous system, in particular in the early specification of the diencephalon. The polypeptide is LIM/homeobox protein Lhx5 (lhx5) (Xenopus laevis (African clawed frog)).